A 432-amino-acid polypeptide reads, in one-letter code: Adenylosuccinate synthetase (432 aa).

GTP contacts are provided by residues 13–19 (GDEGKGK) and 41–43 (GHT). Catalysis depends on Asp-14, which acts as the Proton acceptor. Positions 14 and 41 each coordinate Mg(2+). Residues 14–17 (DEGK), 39–42 (NAGH), Thr-130, Arg-144, Gln-225, Thr-240, and Arg-304 each bind IMP. Catalysis depends on His-42, which acts as the Proton donor. 300–306 (ATTGRRR) is a substrate binding site. GTP is bound by residues Arg-306, 332–334 (KLD), and 415–417 (STG).

It belongs to the adenylosuccinate synthetase family. In terms of assembly, homodimer. Mg(2+) serves as cofactor.

The protein resides in the cytoplasm. The catalysed reaction is IMP + L-aspartate + GTP = N(6)-(1,2-dicarboxyethyl)-AMP + GDP + phosphate + 2 H(+). It functions in the pathway purine metabolism; AMP biosynthesis via de novo pathway; AMP from IMP: step 1/2. Functionally, plays an important role in the de novo pathway of purine nucleotide biosynthesis. Catalyzes the first committed step in the biosynthesis of AMP from IMP. The polypeptide is Adenylosuccinate synthetase (Salmonella paratyphi A (strain AKU_12601)).